The primary structure comprises 213 residues: Putative manganese efflux pump MntP (213 aa).

The next 6 membrane-spanning stretches (helical) occupy residues 3–23, 36–56, 67–87, 130–150, 152–172, and 187–207; these read ILSI…VSVA, ALKV…IGWG, AFDH…MIFE, LAIA…FLGI, IVQT…LGVI, and IVGG…HTGI.

It belongs to the MntP (TC 9.B.29) family.

Its subcellular location is the cell membrane. Probably functions as a manganese efflux pump. This is Putative manganese efflux pump MntP from Clostridium perfringens (strain ATCC 13124 / DSM 756 / JCM 1290 / NCIMB 6125 / NCTC 8237 / Type A).